A 153-amino-acid chain; its full sequence is D-aminoacyl-tRNA deacylase (153 aa).

The Gly-cisPro motif, important for rejection of L-amino acids signature appears at 137–138 (GP).

This sequence belongs to the DTD family. Homodimer.

It localises to the cytoplasm. The enzyme catalyses glycyl-tRNA(Ala) + H2O = tRNA(Ala) + glycine + H(+). The catalysed reaction is a D-aminoacyl-tRNA + H2O = a tRNA + a D-alpha-amino acid + H(+). An aminoacyl-tRNA editing enzyme that deacylates mischarged D-aminoacyl-tRNAs. Also deacylates mischarged glycyl-tRNA(Ala), protecting cells against glycine mischarging by AlaRS. Acts via tRNA-based rather than protein-based catalysis; rejects L-amino acids rather than detecting D-amino acids in the active site. By recycling D-aminoacyl-tRNA to D-amino acids and free tRNA molecules, this enzyme counteracts the toxicity associated with the formation of D-aminoacyl-tRNA entities in vivo and helps enforce protein L-homochirality. This chain is D-aminoacyl-tRNA deacylase, found in Dehalococcoides mccartyi (strain ATCC BAA-2100 / JCM 16839 / KCTC 5957 / BAV1).